Consider the following 152-residue polypeptide: SsrA-binding protein (152 aa).

A disordered region spans residues 122–152 (KGKKNHDKRETEAARDWQRDKARLMKGDRGD). Positions 128–152 (DKRETEAARDWQRDKARLMKGDRGD) are enriched in basic and acidic residues.

The protein belongs to the SmpB family.

It is found in the cytoplasm. Functionally, required for rescue of stalled ribosomes mediated by trans-translation. Binds to transfer-messenger RNA (tmRNA), required for stable association of tmRNA with ribosomes. tmRNA and SmpB together mimic tRNA shape, replacing the anticodon stem-loop with SmpB. tmRNA is encoded by the ssrA gene; the 2 termini fold to resemble tRNA(Ala) and it encodes a 'tag peptide', a short internal open reading frame. During trans-translation Ala-aminoacylated tmRNA acts like a tRNA, entering the A-site of stalled ribosomes, displacing the stalled mRNA. The ribosome then switches to translate the ORF on the tmRNA; the nascent peptide is terminated with the 'tag peptide' encoded by the tmRNA and targeted for degradation. The ribosome is freed to recommence translation, which seems to be the essential function of trans-translation. This Caulobacter sp. (strain K31) protein is SsrA-binding protein.